A 202-amino-acid polypeptide reads, in one-letter code: UPF0316 protein SH1041 (202 aa).

The next 3 membrane-spanning stretches (helical) occupy residues 8–28 (PWSM…FLTM), 40–60 (MAAA…GMVM), and 66–86 (IQNI…GMKI).

It belongs to the UPF0316 family.

It localises to the cell membrane. The chain is UPF0316 protein SH1041 from Staphylococcus haemolyticus (strain JCSC1435).